The sequence spans 692 residues: MESKPSRIPRRISVQPSGSLSARMVSGNRGTSLNDSYHSRDSSFRLDSEYQSASASASASPYQSTWYSESEITQGARSRSQNQQRDHDSKRPKLSCTNCTSTSAGRNIGSGLNTLSDSSWRPGQVPRSSSMVLGSFGTDLMRERRDLERRRDSSISSLMDYSHRSGDFTAPAYVQERVPSSYSQGARPKENAANTLQLNSSTNHQLPSEHQTVPSSRDSSRSSFRSHFSPRQSESFRNSSHPAFSYLSSRNETPTISSSERAGSSQRPFQESSDNEGRRTTRRLLSRIASSMSSTFFSRRSSQDSLNTRSLSSENYISPRTLTSQSRNNGASSSEVNDGRASEASQGFRFLRRRWGLSSLSQNHSSEPDAENFNQESEGRNTGPWLSSSLRNRCTPLFSRRRREGRDESSRISPSDVPPRSHLFRRESNEVVHLEAQGDSLGAAASRPQASGASGNASASGSTPDLPQGGRNTGIAGILPGSLFRFAVPPALGSNLTDNVTITVDIIPSGWSSADGKSEKAKSAPSRDPEKLQKIKESLLLEDSDEEEEGDLCRICQMAAASSSNLLIEPCKCTGSLQYVHQECMKKWLQAKINSGSSLEAVTTCELCKEKLQLNLEDFDIHELHRAHANEQAEYEFISSGLYLVVLLHLCEQSFSDMMGNTIEPSTRVRFINLARTLQAHMEDLETSEDEF.

Met-1 carries the post-translational modification N-acetylmethionine. Disordered regions lie at residues 1–165 (MESK…SHRS), 201–280 (STNH…GRRT), 296–343 (FFSR…RASE), 360–425 (LSQN…HLFR), 440–474 (SLGA…RNTG), and 512–532 (SSAD…PEKL). Residues 37–48 (YHSRDSSFRLDS) show a composition bias toward basic and acidic residues. Polar residues-rich tracts occupy residues 61-83 (PYQS…SQNQ) and 95-132 (SCTN…SSMV). Over residues 140–153 (LMRERRDLERRRDS) the composition is skewed to basic and acidic residues. A compositionally biased stretch (polar residues) spans 201–214 (STNHQLPSEHQTVP). Residues 215–233 (SSRDSSRSSFRSHFSPRQS) are compositionally biased toward low complexity. Polar residues predominate over residues 235–272 (SFRNSSHPAFSYLSSRNETPTISSSERAGSSQRPFQES). The segment covering 296 to 305 (FFSRRSSQDS) has biased composition (low complexity). Residues 306–336 (LNTRSLSSENYISPRTLTSQSRNNGASSSEV) are compositionally biased toward polar residues. Phosphoserine is present on residues Ser-318 and Ser-389. Positions 450–462 (ASGASGNASASGS) are enriched in low complexity. Residues 516 to 532 (GKSEKAKSAPSRDPEKL) are compositionally biased toward basic and acidic residues. Residues 545–615 (DEEEEGDLCR…ELCKEKLQLN (71 aa)) form an RING-CH-type zinc finger. The Zn(2+) site is built by Cys-553, Cys-556, Cys-571, Cys-573, His-581, Cys-584, Cys-605, and Cys-608. Thr-687 is subject to Phosphothreonine. Ser-688 bears the Phosphoserine mark.

The protein localises to the cytoplasm. The enzyme catalyses S-ubiquitinyl-[E2 ubiquitin-conjugating enzyme]-L-cysteine + [acceptor protein]-L-lysine = [E2 ubiquitin-conjugating enzyme]-L-cysteine + N(6)-ubiquitinyl-[acceptor protein]-L-lysine.. Its pathway is protein modification; protein ubiquitination. Functionally, E3 ubiquitin-protein ligase which may specifically enhance the E2 activity of HIP2. E3 ubiquitin ligases accept ubiquitin from an E2 ubiquitin-conjugating enzyme in the form of a thioester and then directly transfer the ubiquitin to targeted substrates. May be involved in T-cell proliferation by regulating LIF secretion. May play a role in lysosome homeostasis. Promotes 'Lys-6', 'Lys-11' and 'Lys-63'-linked mixed polyubiquitination on ATG14 leading to the inhibition of autophagy by impairing the interaction between ATG14 and STX7. Participates in the dopamine-mediated negative regulation of the NLRP3 inflammasome by promoting its uibiquitination and subsequent degradation. The chain is E3 ubiquitin-protein ligase MARCHF7 (Marchf7) from Rattus norvegicus (Rat).